The primary structure comprises 187 residues: Ribosome-recycling factor (187 aa).

It belongs to the RRF family.

The protein localises to the cytoplasm. Responsible for the release of ribosomes from messenger RNA at the termination of protein biosynthesis. May increase the efficiency of translation by recycling ribosomes from one round of translation to another. This chain is Ribosome-recycling factor, found in Bradyrhizobium sp. (strain ORS 278).